The primary structure comprises 321 residues: Glucokinase (321 aa).

An ATP-binding site is contributed by 8-13 (GDVGGT).

Belongs to the bacterial glucokinase family.

The protein localises to the cytoplasm. The catalysed reaction is D-glucose + ATP = D-glucose 6-phosphate + ADP + H(+). This Escherichia coli O127:H6 (strain E2348/69 / EPEC) protein is Glucokinase.